A 482-amino-acid polypeptide reads, in one-letter code: tRNA sulfurtransferase (482 aa).

Residues 61 to 165 (LAIRDALTRI…DDRLLLIKGR (105 aa)) form the THUMP domain. Residues 183 to 184 (LI), K265, G287, and Q296 contribute to the ATP site. Cysteines 344 and 456 form a disulfide. The Rhodanese domain occupies 404 to 482 (FGPNDVILDI…GFNNVKVYRP (79 aa)). Catalysis depends on C456, which acts as the Cysteine persulfide intermediate.

The protein belongs to the ThiI family.

It localises to the cytoplasm. It carries out the reaction [ThiI sulfur-carrier protein]-S-sulfanyl-L-cysteine + a uridine in tRNA + 2 reduced [2Fe-2S]-[ferredoxin] + ATP + H(+) = [ThiI sulfur-carrier protein]-L-cysteine + a 4-thiouridine in tRNA + 2 oxidized [2Fe-2S]-[ferredoxin] + AMP + diphosphate. The catalysed reaction is [ThiS sulfur-carrier protein]-C-terminal Gly-Gly-AMP + S-sulfanyl-L-cysteinyl-[cysteine desulfurase] + AH2 = [ThiS sulfur-carrier protein]-C-terminal-Gly-aminoethanethioate + L-cysteinyl-[cysteine desulfurase] + A + AMP + 2 H(+). It functions in the pathway cofactor biosynthesis; thiamine diphosphate biosynthesis. Its function is as follows. Catalyzes the ATP-dependent transfer of a sulfur to tRNA to produce 4-thiouridine in position 8 of tRNAs, which functions as a near-UV photosensor. Also catalyzes the transfer of sulfur to the sulfur carrier protein ThiS, forming ThiS-thiocarboxylate. This is a step in the synthesis of thiazole, in the thiamine biosynthesis pathway. The sulfur is donated as persulfide by IscS. The polypeptide is tRNA sulfurtransferase (Escherichia coli (strain ATCC 8739 / DSM 1576 / NBRC 3972 / NCIMB 8545 / WDCM 00012 / Crooks)).